The sequence spans 340 residues: Phenylalanine--tRNA ligase alpha subunit (340 aa).

Glutamate 255 contributes to the Mg(2+) binding site.

This sequence belongs to the class-II aminoacyl-tRNA synthetase family. Phe-tRNA synthetase alpha subunit type 1 subfamily. In terms of assembly, tetramer of two alpha and two beta subunits. The cofactor is Mg(2+).

The protein localises to the cytoplasm. The enzyme catalyses tRNA(Phe) + L-phenylalanine + ATP = L-phenylalanyl-tRNA(Phe) + AMP + diphosphate + H(+). This is Phenylalanine--tRNA ligase alpha subunit from Heliobacterium modesticaldum (strain ATCC 51547 / Ice1).